The chain runs to 105 residues: MAESPFKADIERAQKELTEKMTPGAIAYIPGSSVINKTGSWRVFKPEFHKDKCVRCFLCYIYCPEPAIYLDEEGYPVFDYDYCKGCGICANECPTKAIEMVREVK.

4Fe-4S ferredoxin-type domains are found at residues 44–73 and 74–103; these read FKPE…LDEE and GYPV…MVRE. Cys-53, Cys-56, Cys-59, Cys-63, Cys-83, Cys-86, Cys-89, and Cys-93 together coordinate [4Fe-4S] cluster.

As to quaternary structure, heterotetramer of one alpha, one beta, one delta and one gamma chain. [4Fe-4S] cluster is required as a cofactor.

This is Pyruvate synthase subunit PorD (porD) from Pyrococcus horikoshii (strain ATCC 700860 / DSM 12428 / JCM 9974 / NBRC 100139 / OT-3).